The following is a 515-amino-acid chain: Sterol 14-alpha demethylase cyp51A (515 aa).

Residues 7 to 29 form a helical membrane-spanning segment; sequence LTAYMAVAVLTAILLNVVYQLFF. Residues asparagine 33 and asparagine 269 are each glycosylated (N-linked (GlcNAc...) asparagine). Residue cysteine 454 participates in heme binding. Residue asparagine 512 is glycosylated (N-linked (GlcNAc...) asparagine).

Belongs to the cytochrome P450 family. The cofactor is heme.

Its subcellular location is the endoplasmic reticulum membrane. It catalyses the reaction a 14alpha-methyl steroid + 3 reduced [NADPH--hemoprotein reductase] + 3 O2 = a Delta(14) steroid + formate + 3 oxidized [NADPH--hemoprotein reductase] + 4 H2O + 4 H(+). It carries out the reaction a 14alpha-methyl steroid + reduced [NADPH--hemoprotein reductase] + O2 = a 14alpha-hydroxymethyl steroid + oxidized [NADPH--hemoprotein reductase] + H2O + H(+). The catalysed reaction is a 14alpha-hydroxymethyl steroid + reduced [NADPH--hemoprotein reductase] + O2 = a 14alpha-formyl steroid + oxidized [NADPH--hemoprotein reductase] + 2 H2O + H(+). The enzyme catalyses a 14alpha-formyl steroid + reduced [NADPH--hemoprotein reductase] + O2 = a Delta(14) steroid + formate + oxidized [NADPH--hemoprotein reductase] + H2O + 2 H(+). It catalyses the reaction lanosterol + 3 reduced [NADPH--hemoprotein reductase] + 3 O2 = 4,4-dimethyl-5alpha-cholesta-8,14,24-trien-3beta-ol + formate + 3 oxidized [NADPH--hemoprotein reductase] + 4 H2O + 4 H(+). It carries out the reaction lanosterol + reduced [NADPH--hemoprotein reductase] + O2 = 32-hydroxylanosterol + oxidized [NADPH--hemoprotein reductase] + H2O + H(+). The catalysed reaction is 32-hydroxylanosterol + reduced [NADPH--hemoprotein reductase] + O2 = 32-oxolanosterol + oxidized [NADPH--hemoprotein reductase] + 2 H2O + H(+). The enzyme catalyses 32-oxolanosterol + reduced [NADPH--hemoprotein reductase] + O2 = 4,4-dimethyl-5alpha-cholesta-8,14,24-trien-3beta-ol + formate + oxidized [NADPH--hemoprotein reductase] + H2O + 2 H(+). It catalyses the reaction eburicol + 3 reduced [NADPH--hemoprotein reductase] + 3 O2 = 14-demethyleburicol + formate + 3 oxidized [NADPH--hemoprotein reductase] + 4 H2O + 4 H(+). It carries out the reaction eburicol + reduced [NADPH--hemoprotein reductase] + O2 = 32-hydroxyeburicol + oxidized [NADPH--hemoprotein reductase] + H2O + H(+). The catalysed reaction is 32-hydroxyeburicol + reduced [NADPH--hemoprotein reductase] + O2 = 32-oxoeburicol + oxidized [NADPH--hemoprotein reductase] + 2 H2O + H(+). The enzyme catalyses 32-oxoeburicol + reduced [NADPH--hemoprotein reductase] + O2 = 14-demethyleburicol + formate + oxidized [NADPH--hemoprotein reductase] + H2O + 2 H(+). It functions in the pathway steroid metabolism; ergosterol biosynthesis. With respect to regulation, the sterol 14-alpha demethylase activity is inhibited by azole compounds. Activity is inhibited by the novel and long-acting fungicidal azole, PC1244. Functionally, sterol 14alpha-demethylase, encoded by cyp51A and cyp51B, that plays a critical role in the third module of ergosterol biosynthesis pathway, being ergosterol the major sterol component in fungal membranes that participates in a variety of functions. The third module or late pathway involves the ergosterol synthesis itself through consecutive reactions that mainly occur in the endoplasmic reticulum (ER) membrane. In filamentous fungi, during the initial step of this module, lanosterol (lanosta-8,24-dien-3beta-ol) can be metabolized to eburicol. Sterol 14alpha-demethylase catalyzes the three-step oxidative removal of the 14alpha-methyl group (C-32) of both these sterols in the form of formate, and converts eburicol and lanosterol to 14-demethyleburicol (4,4,24-trimethylergosta-8,14,24(28)-trienol) and 4,4-dimethyl-5alpha-cholesta-8,14,24-trien-3beta-ol, respectively, which are further metabolized by other enzymes in the pathway to ergosterol. Can also use substrates not intrinsic to fungi, such as 24,25-dihydrolanosterol (DHL), producing 4,4'-dimethyl-8,14-cholestadien-3-beta-ol, but at lower rates than the endogenous substrates. In terms of biological role, as a target of azole drugs, plays a crucial role in azole susceptibility. The protein is Sterol 14-alpha demethylase cyp51A of Aspergillus fumigatus (strain ATCC MYA-4609 / CBS 101355 / FGSC A1100 / Af293) (Neosartorya fumigata).